The chain runs to 146 residues: Inner membrane protein YdgK (146 aa).

The Cytoplasmic segment spans residues 1 to 12; the sequence is MTTTTPQRIGGW. Residues 13-33 traverse the membrane as a helical segment; that stretch reads LLGPLAWLLVALLSTTLALLL. At 34–59 the chain is on the periplasmic side; that stretch reads YTAALSSPQTFQTLGGQALTTQILWG. Residues 60–80 traverse the membrane as a helical segment; that stretch reads VSFITAIALWYYTLWLTIAFF. The Cytoplasmic portion of the chain corresponds to 81 to 89; it reads KRRRCVPKH. Residues 90–110 form a helical membrane-spanning segment; the sequence is YIIWLLISVLLAVKAFAFSPV. At 111-112 the chain is on the periplasmic side; the sequence is ED. Residues 113 to 133 form a helical membrane-spanning segment; it reads GIAVRQLLFTLLATALIVPYF. Residues 134–146 lie on the Cytoplasmic side of the membrane; that stretch reads KRSSRVKATFVNP.

The protein to Synechocystis PCC 6803 sll0481.

The protein resides in the cell inner membrane. This chain is Inner membrane protein YdgK (ydgK), found in Escherichia coli (strain K12).